The following is a 130-amino-acid chain: Small ribosomal subunit protein uS9 (130 aa).

It belongs to the universal ribosomal protein uS9 family.

The chain is Small ribosomal subunit protein uS9 from Paraburkholderia phytofirmans (strain DSM 17436 / LMG 22146 / PsJN) (Burkholderia phytofirmans).